The primary structure comprises 104 residues: Type IV secretion system protein PtlB homolog (104 aa).

The chain crosses the membrane as a helical span at residues Ile30–Leu50.

Belongs to the virB3 family.

Its subcellular location is the cell membrane. This is Type IV secretion system protein PtlB homolog (ptlB) from Bordetella parapertussis (strain 12822 / ATCC BAA-587 / NCTC 13253).